We begin with the raw amino-acid sequence, 322 residues long: Phospho-N-acetylmuramoyl-pentapeptide-transferase (322 aa).

10 helical membrane-spanning segments follow: residues 9–29 (IALV…INFM), 54–74 (TMGG…VAAW), 82–102 (VWIL…DDGI), 122–142 (IIIA…FGLY), 145–165 (FAGV…WLVG), 176–196 (LDGL…YIAF), 200–220 (NFAV…FFIF), 227–247 (IFMG…VSIM), 255–275 (LLIG…VISF), and 302–322 (VDIV…AIWG).

It belongs to the glycosyltransferase 4 family. MraY subfamily. Mg(2+) is required as a cofactor.

It is found in the cell membrane. It catalyses the reaction UDP-N-acetyl-alpha-D-muramoyl-L-alanyl-gamma-D-glutamyl-L-lysyl-D-alanyl-D-alanine + di-trans,octa-cis-undecaprenyl phosphate = Mur2Ac(oyl-L-Ala-gamma-D-Glu-L-Lys-D-Ala-D-Ala)-di-trans,octa-cis-undecaprenyl diphosphate + UMP. It participates in cell wall biogenesis; peptidoglycan biosynthesis. Its function is as follows. Catalyzes the initial step of the lipid cycle reactions in the biosynthesis of the cell wall peptidoglycan: transfers peptidoglycan precursor phospho-MurNAc-pentapeptide from UDP-MurNAc-pentapeptide onto the lipid carrier undecaprenyl phosphate, yielding undecaprenyl-pyrophosphoryl-MurNAc-pentapeptide, known as lipid I. In Lactobacillus acidophilus (strain ATCC 700396 / NCK56 / N2 / NCFM), this protein is Phospho-N-acetylmuramoyl-pentapeptide-transferase.